Here is a 418-residue protein sequence, read N- to C-terminus: Tektin-1 (418 aa).

Coiled-coil stretches lie at residues 20-107 (NKSQ…SYKE), 134-177 (QELQ…DLKD), 266-308 (NGLK…QQEG), and 332-383 (VAQY…ENTI).

The protein belongs to the tektin family. As to quaternary structure, microtubule inner protein component of sperm flagellar doublet microtubules. In terms of processing, ubiquitinated, leading to its degradation. Deubiquitinated by USP16, promoting its stability. As to expression, predominantly expressed in testis.

The protein resides in the cytoplasm. Its subcellular location is the cytoskeleton. It is found in the cilium axoneme. It localises to the flagellum axoneme. In terms of biological role, microtubule inner protein (MIP) part of the dynein-decorated doublet microtubules (DMTs) in cilia and flagellar axoneme. Forms filamentous polymers in the walls of ciliary and flagellar microtubules. The protein is Tektin-1 (Tekt1) of Rattus norvegicus (Rat).